The following is a 342-amino-acid chain: Protein BASIC PENTACYSTEINE6 (342 aa).

Positions A41–D67 form a coiled coil. The interval A41 to A76 is alanine-zipper. Residues R143–D199 are disordered. The interval A164 to K195 is required for nucleus and nucleolus localization. Residues R185–K194 show a composition bias toward basic residues. A Nuclear localization signal motif is present at residues K192 to K195.

This sequence belongs to the BBR/BPC family. As to quaternary structure, homodimer. Heterodimer with BPC4. Expressed in seedlings, leaves and pistils. Detected in the base of flowers and tips of carpels, in sepal vasculature, in young rosette, in the lateral and tip of primary roots, and in ovule at the exception of the outer integument.

Its subcellular location is the nucleus. It is found in the nucleolus. In terms of biological role, transcriptional regulator that specifically binds to GA-rich elements (GAGA-repeats) present in regulatory sequences of genes involved in developmental processes. This Arabidopsis thaliana (Mouse-ear cress) protein is Protein BASIC PENTACYSTEINE6 (BPC6).